The following is a 939-amino-acid chain: cGMP-dependent 3',5'-cyclic phosphodiesterase (939 aa).

Residue Gly-2 is the site of N-myristoyl glycine attachment. S-palmitoyl cysteine attachment occurs at residues Cys-5 and Cys-11. The disordered stretch occupies residues 16–38 (YPAARPAEPRGQQVFLKPDEPPP). Ser-116 bears the Phosphoserine mark. Residues 197-217 (PEAVQNTSVDASEDQKDEKGY) are disordered. GAF domains are found at residues 236–373 (ATSL…HYTG) and 408–547 (DVSV…GISI). Positions 430, 445, 464, 487, and 498 each coordinate 3',5'-cyclic GMP. The PDEase domain maps to 577-901 (SDDEYTKLLH…EHWTKVSHKF (325 aa)). The active-site Proton donor is the His-655. Zn(2+)-binding residues include His-659, His-695, Asp-696, and Asp-807. Asp-696 contacts Mg(2+).

Belongs to the cyclic nucleotide phosphodiesterase family. PDE2 subfamily. Homodimer. Zn(2+) is required as a cofactor. It depends on Mg(2+) as a cofactor. Expressed in brain and liver (at protein level).

It is found in the cytoplasm. Its subcellular location is the mitochondrion matrix. The protein resides in the mitochondrion inner membrane. The protein localises to the mitochondrion outer membrane. It localises to the cell membrane. It carries out the reaction a nucleoside 3',5'-cyclic phosphate + H2O = a nucleoside 5'-phosphate + H(+). The catalysed reaction is 3',5'-cyclic GMP + H2O = GMP + H(+). It catalyses the reaction 3',5'-cyclic AMP + H2O = AMP + H(+). The 3',5'-cyclic-AMP phosphodiesterase activity is stimulated by 3',5'-cyclic GMP. Specifically inhibited by Bay 60-7550. Functionally, cGMP-activated cyclic nucleotide phosphodiesterase with a dual-specificity for the second messengers cAMP and cGMP, which are key regulators of many important physiological processes. Has a higher efficiency with cGMP compared to cAMP. Plays a role in cell growth and migration. Its function is as follows. Regulates mitochondrial cAMP levels and respiration. Involved in the regulation of mitochondria morphology/dynamics and apoptotic cell death via local modulation of cAMP/PKA signaling in the mitochondrion, including the monitoring of local cAMP levels at the outer mitochondrial membrane and of PKA-dependent phosphorylation of DNM1L. This chain is cGMP-dependent 3',5'-cyclic phosphodiesterase, found in Mus musculus (Mouse).